The chain runs to 415 residues: Carboxypeptidase G2 (415 aa).

Positions 1 to 22 are cleaved as a signal peptide; that stretch reads MRPSIHRTAIAAVLATAFVAGT. Histidine 112 provides a ligand contact to Zn(2+). Residue aspartate 114 is part of the active site. Aspartate 141 serves as a coordination point for Zn(2+). The Proton acceptor role is filled by glutamate 175. Zn(2+) is bound by residues glutamate 176, glutamate 200, and histidine 385.

It belongs to the peptidase M20A family. In terms of assembly, homodimer. Requires Zn(2+) as cofactor.

It carries out the reaction Release of C-terminal glutamate residues from a wide range of N-acylating moieties, including peptidyl, aminoacyl, benzoyl, benzyloxycarbonyl, folyl and pteroyl groups.. Catalyzes the hydrolysis of reduced and non-reduced folates to pteroates and L-glutamate. This enzyme has a broad specificity. This chain is Carboxypeptidase G2 (cpg2), found in Pseudomonas sp. (strain RS-16).